The chain runs to 166 residues: Interferon gamma (166 aa).

An N-terminal signal peptide occupies residues 1–23 (MNYTSFILAFQLCAILGSSTYYC). Gln-24 bears the Pyrrolidone carboxylic acid mark. Residues Asn-39 and Asn-106 are each glycosylated (N-linked (GlcNAc...) asparagine). The interval 147–166 (ANLRKRKRSQNPFRGRRALQ) is disordered. Positions 148–166 (NLRKRKRSQNPFRGRRALQ) are enriched in basic residues.

The protein belongs to the type II (or gamma) interferon family. As to quaternary structure, homodimer. Interacts with IFNGR1 (via extracellular domain); this interaction promotes IFNGR1 dimerization. As to expression, released primarily from activated T lymphocytes.

The protein resides in the secreted. In terms of biological role, type II interferon produced by immune cells such as T-cells and NK cells that plays crucial roles in antimicrobial, antiviral, and antitumor responses by activating effector immune cells and enhancing antigen presentation. Primarily signals through the JAK-STAT pathway after interaction with its receptor IFNGR1 to affect gene regulation. Upon IFNG binding, IFNGR1 intracellular domain opens out to allow association of downstream signaling components JAK2, JAK1 and STAT1, leading to STAT1 activation, nuclear translocation and transcription of IFNG-regulated genes. Many of the induced genes are transcription factors such as IRF1 that are able to further drive regulation of a next wave of transcription. Plays a role in class I antigen presentation pathway by inducing a replacement of catalytic proteasome subunits with immunoproteasome subunits. In turn, increases the quantity, quality, and repertoire of peptides for class I MHC loading. Increases the efficiency of peptide generation also by inducing the expression of activator PA28 that associates with the proteasome and alters its proteolytic cleavage preference. Up-regulates as well MHC II complexes on the cell surface by promoting expression of several key molecules such as cathepsins B/CTSB, H/CTSH, and L/CTSL. Participates in the regulation of hematopoietic stem cells during development and under homeostatic conditions by affecting their development, quiescence, and differentiation. This is Interferon gamma (IFNG) from Equus asinus (Donkey).